The sequence spans 325 residues: Beta-ketoacyl-[acyl-carrier-protein] synthase III (325 aa).

Active-site residues include C119 and H252. The segment at 253 to 257 (QANIR) is ACP-binding. The active site involves N282.

Belongs to the thiolase-like superfamily. FabH family. In terms of assembly, homodimer.

The protein resides in the cytoplasm. It catalyses the reaction malonyl-[ACP] + acetyl-CoA + H(+) = 3-oxobutanoyl-[ACP] + CO2 + CoA. Its pathway is lipid metabolism; fatty acid biosynthesis. Catalyzes the condensation reaction of fatty acid synthesis by the addition to an acyl acceptor of two carbons from malonyl-ACP. Catalyzes the first condensation reaction which initiates fatty acid synthesis and may therefore play a role in governing the total rate of fatty acid production. Possesses both acetoacetyl-ACP synthase and acetyl transacylase activities. Its substrate specificity determines the biosynthesis of branched-chain and/or straight-chain of fatty acids. The polypeptide is Beta-ketoacyl-[acyl-carrier-protein] synthase III (Acidovorax ebreus (strain TPSY) (Diaphorobacter sp. (strain TPSY))).